Consider the following 271-residue polypeptide: tRNA pseudouridine synthase A (271 aa).

Asp52 serves as the catalytic Nucleophile. Tyr110 contributes to the substrate binding site.

It belongs to the tRNA pseudouridine synthase TruA family. In terms of assembly, homodimer.

The enzyme catalyses uridine(38/39/40) in tRNA = pseudouridine(38/39/40) in tRNA. In terms of biological role, formation of pseudouridine at positions 38, 39 and 40 in the anticodon stem and loop of transfer RNAs. The protein is tRNA pseudouridine synthase A of Burkholderia mallei (strain NCTC 10247).